A 375-amino-acid polypeptide reads, in one-letter code: Chaperone protein DnaJ (375 aa).

The 66-residue stretch at 5 to 70 folds into the J domain; it reads DFYETLGVAK…QKRAAYDRYG (66 aa). Residues 136–214 form a CR-type zinc finger; that stretch reads GKTAQIRVPT…CHGQGRVTEE (79 aa). Residues Cys-149, Cys-152, Cys-166, Cys-169, Cys-188, Cys-191, Cys-202, and Cys-205 each coordinate Zn(2+). 4 CXXCXGXG motif repeats span residues 149-156, 166-173, 188-195, and 202-209; these read CDVCSGSG, CGTCQGTG, CPTCHGRG, and CPKCHGQG.

It belongs to the DnaJ family. Homodimer. Zn(2+) serves as cofactor.

The protein localises to the cytoplasm. In terms of biological role, participates actively in the response to hyperosmotic and heat shock by preventing the aggregation of stress-denatured proteins and by disaggregating proteins, also in an autonomous, DnaK-independent fashion. Unfolded proteins bind initially to DnaJ; upon interaction with the DnaJ-bound protein, DnaK hydrolyzes its bound ATP, resulting in the formation of a stable complex. GrpE releases ADP from DnaK; ATP binding to DnaK triggers the release of the substrate protein, thus completing the reaction cycle. Several rounds of ATP-dependent interactions between DnaJ, DnaK and GrpE are required for fully efficient folding. Also involved, together with DnaK and GrpE, in the DNA replication of plasmids through activation of initiation proteins. The polypeptide is Chaperone protein DnaJ (Rhizobium etli (strain ATCC 51251 / DSM 11541 / JCM 21823 / NBRC 15573 / CFN 42)).